A 118-amino-acid chain; its full sequence is Deoxynogalonate monooxygenase (118 aa).

The ABM domain maps to 14-100 (VTFVNRFTVH…ALSTSEHGLF (87 aa)).

Homodimer.

It carries out the reaction deoxynogalonate + O2 = nogalonate + H2O + H(+). It participates in antibiotic biosynthesis. In terms of biological role, involved in the biosynthesis of the anthracycline (aromatic polyketide) antibiotic nogalamycin. Catalyzes the oxygenation of 12-deoxy-nogalonic acid at position 12 to yield nogalonic acid. This chain is Deoxynogalonate monooxygenase, found in Streptomyces nogalater.